We begin with the raw amino-acid sequence, 31 residues long: Ranatuerin-2Ca (31 aa).

The cysteines at positions 24 and 29 are disulfide-linked.

As to expression, expressed by the skin glands.

The protein resides in the secreted. In terms of biological role, antibacterial activity against Gram-positive bacterium S.aureus and Gram-negative bacterium E.coli. Has activity against C.albicans. The protein is Ranatuerin-2Ca of Lithobates clamitans (Green frog).